Reading from the N-terminus, the 275-residue chain is uncharacterized protein (275 aa).

[4Fe-4S] cluster is bound by residues Cys-97, Cys-102, Cys-136, and Cys-140. Cys-140 contributes to the siroheme binding site.

This sequence belongs to the nitrite and sulfite reductase 4Fe-4S domain family.

This is an uncharacterized protein from Methanocaldococcus jannaschii (strain ATCC 43067 / DSM 2661 / JAL-1 / JCM 10045 / NBRC 100440) (Methanococcus jannaschii).